The following is a 558-amino-acid chain: Sinalpyl alcohol oxidase Nec3 (558 aa).

The signal sequence occupies residues Met1–Ala28. Thr64–Ala65 serves as a coordination point for FAD. Residue Asn76 is glycosylated (N-linked (GlcNAc...) asparagine). FAD-binding positions include Glu83–Arg84, Val131, Ser135, and Asn139–Phe142. Asn180 is a glycosylation site (N-linked (GlcNAc...) asparagine). Val247 provides a ligand contact to FAD. Residues Asn308, Asn386, and Asn473 are each glycosylated (N-linked (GlcNAc...) asparagine). Cys433 and Cys484 are oxidised to a cystine. Residue Tyr492–His493 coordinates FAD. His493 acts as the Proton donor in catalysis. The active-site Proton acceptor is the Asn531. Pro532–Gln533 lines the FAD pocket.

It belongs to the GMC oxidoreductase family. Monomer. It depends on FAD as a cofactor. As to expression, confined to nectaries.

The catalysed reaction is (E)-sinapyl alcohol + O2 = (E)-sinapaldehyde + H2O2. Its pathway is alkaloid biosynthesis. Its function is as follows. Involved in the production of blood-red nectar containing the alkaloid nesocodin and that serves as a visual attractant for pollinator visitation, including vertebrates such as Phelsuma geckos. The nectar is initially acidic and pale yellow, but slowly becomes alkaline before turning into red within 24 hours. Together with NEC1 and NEC2, facilitates the condensation of sinapaldehyde ((E)-3,5-dimethoxy-4-hydroxycinnamaldehyde) and proline to form nesocodin, a pigment with a stable imine bond. Catalyzes the conversion of sinapyl alcohol to sinapaldehyde. In Nesocodon mauritianus (Blue Mauritius bellflower), this protein is Sinalpyl alcohol oxidase Nec3.